The chain runs to 334 residues: Retinol dehydrogenase 13 (334 aa).

Ser-2 carries the N-acetylserine modification. An NADP(+)-binding site is contributed by 45-51; that stretch reads GANTGIG. Ser-174 provides a ligand contact to substrate. Tyr-200 acts as the Proton acceptor in catalysis.

The protein belongs to the short-chain dehydrogenases/reductases (SDR) family.

It is found in the mitochondrion inner membrane. The catalysed reaction is all-trans-retinol + NADP(+) = all-trans-retinal + NADPH + H(+). Its pathway is cofactor metabolism; retinol metabolism. Retinol dehydrogenase with a clear preference for NADP. Oxidizes all-trans-retinol, but seems to reduce all-trans-retinal with much higher efficiency. Has no activity towards steroid. This chain is Retinol dehydrogenase 13 (Rdh13), found in Mus musculus (Mouse).